Consider the following 111-residue polypeptide: Wound-induced proteinase inhibitor 1 (111 aa).

Positions 1 to 23 (MEAKFAHIILFFLLAFSFETLMA) are cleaved as a signal peptide. The propeptide occupies 24 to 36 (RKESDGPEVIKLL).

Belongs to the protease inhibitor I13 (potato type I serine protease inhibitor) family.

It localises to the secreted. In Solanum peruvianum (Peruvian tomato), this protein is Wound-induced proteinase inhibitor 1.